A 240-amino-acid polypeptide reads, in one-letter code: UDP-2,3-diacylglucosamine hydrolase (240 aa).

Mn(2+) contacts are provided by Asp-8, His-10, Asp-41, Asn-78, and His-113. Residue 78 to 79 coordinates substrate; that stretch reads NR. Substrate contacts are provided by Asp-121, Ser-159, Asn-163, Lys-166, and His-194. The Mn(2+) site is built by His-194 and His-196.

This sequence belongs to the LpxH family. Mn(2+) serves as cofactor.

The protein resides in the cell inner membrane. It catalyses the reaction UDP-2-N,3-O-bis[(3R)-3-hydroxytetradecanoyl]-alpha-D-glucosamine + H2O = 2-N,3-O-bis[(3R)-3-hydroxytetradecanoyl]-alpha-D-glucosaminyl 1-phosphate + UMP + 2 H(+). The protein operates within glycolipid biosynthesis; lipid IV(A) biosynthesis; lipid IV(A) from (3R)-3-hydroxytetradecanoyl-[acyl-carrier-protein] and UDP-N-acetyl-alpha-D-glucosamine: step 4/6. Hydrolyzes the pyrophosphate bond of UDP-2,3-diacylglucosamine to yield 2,3-diacylglucosamine 1-phosphate (lipid X) and UMP by catalyzing the attack of water at the alpha-P atom. Involved in the biosynthesis of lipid A, a phosphorylated glycolipid that anchors the lipopolysaccharide to the outer membrane of the cell. In Shewanella baltica (strain OS155 / ATCC BAA-1091), this protein is UDP-2,3-diacylglucosamine hydrolase.